We begin with the raw amino-acid sequence, 164 residues long: Endoribonuclease YbeY (164 aa).

His111, His115, and His121 together coordinate Zn(2+). The disordered stretch occupies residues 140–164 (ELGHPDPYADDDAQKHSTVTIKDSE). Over residues 155 to 164 (HSTVTIKDSE) the composition is skewed to polar residues.

Belongs to the endoribonuclease YbeY family. Zn(2+) is required as a cofactor.

The protein localises to the cytoplasm. Its function is as follows. Single strand-specific metallo-endoribonuclease involved in late-stage 70S ribosome quality control and in maturation of the 3' terminus of the 16S rRNA. In Pseudomonas fluorescens (strain SBW25), this protein is Endoribonuclease YbeY.